Here is a 323-residue protein sequence, read N- to C-terminus: Pantothenate kinase (323 aa).

Over residues 1–12 (MAEQNAASTTGV) the composition is skewed to polar residues. Positions 1 to 24 (MAEQNAASTTGVKPSPRTPDFSPY) are disordered. ATP is bound at residue 108–115 (GSVAVGKS).

The protein belongs to the prokaryotic pantothenate kinase family.

It localises to the cytoplasm. It carries out the reaction (R)-pantothenate + ATP = (R)-4'-phosphopantothenate + ADP + H(+). Its pathway is cofactor biosynthesis; coenzyme A biosynthesis; CoA from (R)-pantothenate: step 1/5. This is Pantothenate kinase from Corynebacterium glutamicum (strain R).